Here is a 633-residue protein sequence, read N- to C-terminus: Chaperone protein DnaK (633 aa).

A Phosphothreonine; by autocatalysis modification is found at T198. A disordered region spans residues 599–633 (QQASQETPGDGDAGAAGAKKKDDDDVVDADYEEVK). The segment covering 622–633 (DDVVDADYEEVK) has biased composition (acidic residues).

Belongs to the heat shock protein 70 family.

In terms of biological role, acts as a chaperone. The sequence is that of Chaperone protein DnaK from Desulfotalea psychrophila (strain LSv54 / DSM 12343).